The sequence spans 1219 residues: Disease resistance-like protein DSC1 (1219 aa).

Positions 9–176 constitute a TIR domain; that stretch reads AEFDVFLSFR…EIAVDTFKKL (168 aa). The active site involves Glu-83. The NB-ARC domain occupies 197-446; it reads LEKLLSWEDL…DIACFFRSEN (250 aa). 216-222 is a binding site for ATP; that stretch reads GMVGIGK. LRR repeat units follow at residues 468 to 493, 538 to 563, 597 to 619, 620 to 642, 665 to 689, 690 to 713, 733 to 757, 759 to 780, 804 to 827, 854 to 877, and 878 to 899; these read LVDK…MAKE, TDKI…AFQG, PNEL…DFDP, KNLV…EKDV, AHNL…INCL, EKLI…IKTQ, SENV…QTFR, LALL…LYKL, MESL…MHLS, CSRL…IGGL, and SSLQ…SFNQ.

It belongs to the disease resistance NB-LRR family. Interacts with CAMTA3 and DSC2.

It carries out the reaction NAD(+) + H2O = ADP-D-ribose + nicotinamide + H(+). Its function is as follows. TIR-NB-LRR receptor-like protein involved in plant defense. Acts as a trigger of hypersensitive response (HR). Functions as a guard of CAMTA3, a negative regulator of immunity, during pathogen infection. This is Disease resistance-like protein DSC1 from Arabidopsis thaliana (Mouse-ear cress).